Reading from the N-terminus, the 565-residue chain is Periplasmic trehalase (565 aa).

An N-terminal signal peptide occupies residues 1 to 30 (MKSPAPSRPQKMALIPACIFLCFAALSVQA). Residues arginine 152, 159-160 (WD), asparagine 196, 205-207 (RSQ), 277-279 (RPE), and glycine 310 contribute to the substrate site. Residues aspartate 312 and glutamate 496 each act as proton donor/acceptor in the active site. Glutamate 511 lines the substrate pocket. Positions 539 to 565 (CDNVPATRPLSESTTQPVKQKEAEPTP) are disordered.

It belongs to the glycosyl hydrolase 37 family. As to quaternary structure, monomer.

It localises to the periplasm. It carries out the reaction alpha,alpha-trehalose + H2O = alpha-D-glucose + beta-D-glucose. Provides the cells with the ability to utilize trehalose at high osmolarity by splitting it into glucose molecules that can subsequently be taken up by the phosphotransferase-mediated uptake system. This Escherichia coli O6:H1 (strain CFT073 / ATCC 700928 / UPEC) protein is Periplasmic trehalase.